The chain runs to 337 residues: UDP-3-O-acylglucosamine N-acyltransferase 2 (337 aa).

Catalysis depends on His-238, which acts as the Proton acceptor.

It belongs to the transferase hexapeptide repeat family. LpxD subfamily. In terms of assembly, homotrimer.

The enzyme catalyses a UDP-3-O-[(3R)-3-hydroxyacyl]-alpha-D-glucosamine + a (3R)-hydroxyacyl-[ACP] = a UDP-2-N,3-O-bis[(3R)-3-hydroxyacyl]-alpha-D-glucosamine + holo-[ACP] + H(+). It functions in the pathway bacterial outer membrane biogenesis; LPS lipid A biosynthesis. Functionally, catalyzes the N-acylation of UDP-3-O-acylglucosamine using 3-hydroxyacyl-ACP as the acyl donor. Is involved in the biosynthesis of lipid A, a phosphorylated glycolipid that anchors the lipopolysaccharide to the outer membrane of the cell. The protein is UDP-3-O-acylglucosamine N-acyltransferase 2 of Francisella tularensis subsp. tularensis (strain FSC 198).